The chain runs to 182 residues: UPF0587 protein YCR090C (182 aa).

Zn(2+)-binding residues include cysteine 36, cysteine 39, cysteine 70, and cysteine 73.

Belongs to the UPF0587 family.

This is UPF0587 protein YCR090C from Saccharomyces cerevisiae (strain ATCC 204508 / S288c) (Baker's yeast).